Here is a 270-residue protein sequence, read N- to C-terminus: Mlc titration factor A (270 aa).

Zn(2+) contacts are provided by His-111, His-148, His-152, and Glu-211.

The protein belongs to the MtfA family. In terms of assembly, interacts with Mlc. It depends on Zn(2+) as a cofactor.

The protein localises to the cytoplasm. In terms of biological role, involved in the modulation of the activity of the glucose-phosphotransferase system (glucose-PTS). Interacts with the transcriptional repressor Mlc, preventing its interaction with DNA and leading to the modulation of expression of genes regulated by Mlc, including ptsG, which encodes the PTS system glucose-specific EIICB component. Its function is as follows. Shows zinc-dependent metallopeptidase activity. The protein is Mlc titration factor A of Yersinia pestis bv. Antiqua (strain Nepal516).